The chain runs to 389 residues: Aspartic protease pepA (389 aa).

The N-terminal stretch at 1 to 20 (MVLINQLGAVLAVCATLTVA) is a signal peptide. Positions 21–67 (APTKGKARFNVPQVAIPKKMVHHPAVSYARALHKFGMKVPKTVQDAA) are cleaved as a propeptide — activation peptide. In terms of domain architecture, Peptidase A1 spans 82–386 (YVTQVTVGEG…DTQGPRIGFA (305 aa)). D98 is a catalytic residue. An N-linked (GlcNAc...) asparagine glycan is attached at N257. D279 is a catalytic residue. A disulfide bridge links C315 with C348.

Belongs to the peptidase A1 family. As to quaternary structure, monomer.

It localises to the secreted. Its function is as follows. Secreted aspartic endopeptidase that allows assimilation of proteinaceous substrates. The scissile peptide bond is attacked by a nucleophilic water molecule activated by two aspartic residues in the active site. Shows a broad primary substrate specificity. Favors hydrophobic residues at the P1 and P1' positions. The polypeptide is Aspartic protease pepA (Arthroderma otae (strain ATCC MYA-4605 / CBS 113480) (Microsporum canis)).